The primary structure comprises 141 residues: Large ribosomal subunit protein uL11 (141 aa).

The protein belongs to the universal ribosomal protein uL11 family. As to quaternary structure, part of the ribosomal stalk of the 50S ribosomal subunit. Interacts with L10 and the large rRNA to form the base of the stalk. L10 forms an elongated spine to which L12 dimers bind in a sequential fashion forming a multimeric L10(L12)X complex. One or more lysine residues are methylated.

In terms of biological role, forms part of the ribosomal stalk which helps the ribosome interact with GTP-bound translation factors. The chain is Large ribosomal subunit protein uL11 from Lactiplantibacillus plantarum (strain ATCC BAA-793 / NCIMB 8826 / WCFS1) (Lactobacillus plantarum).